We begin with the raw amino-acid sequence, 92 residues long: YcgL domain-containing protein Shewmr7_2249 (92 aa).

Residues 1–85 (MLCAVYKSSR…PQVNLLAEHR (85 aa)) form the YcgL domain.

In Shewanella sp. (strain MR-7), this protein is YcgL domain-containing protein Shewmr7_2249.